The primary structure comprises 187 residues: RNA pyrophosphohydrolase (187 aa).

Positions 6 to 149 constitute a Nudix hydrolase domain; it reads GYRANVGIIL…KRQVYRQALT (144 aa). The Nudix box motif lies at 38 to 59; that stretch reads GGIKSGETPTEAMYRELAEETG. The disordered stretch occupies residues 166-187; that stretch reads AYREPLEPVEKNRKKSSDTRQS.

This sequence belongs to the Nudix hydrolase family. RppH subfamily. Requires a divalent metal cation as cofactor.

In terms of biological role, accelerates the degradation of transcripts by removing pyrophosphate from the 5'-end of triphosphorylated RNA, leading to a more labile monophosphorylated state that can stimulate subsequent ribonuclease cleavage. The polypeptide is RNA pyrophosphohydrolase (Nitrosomonas europaea (strain ATCC 19718 / CIP 103999 / KCTC 2705 / NBRC 14298)).